Consider the following 354-residue polypeptide: MTETKQTDAAAPRLTSLSHGGGCGCKIAPGVLSELLRRTAPPALFPDLLVGTETSDDAAVYRLNDEQAIVATTDFFMPIVDDPFDFGRIAATNALSDVYAMGGKPILALALVGMPINVLPHETIAAVLRGGEAVCADAGIPVAGGHSIDSVEPIYGLAALGVVHPARVKRNAAARAGDVLVLGKPLGVGVLSAALKKDRLDAQGYAQMIATTTKLNRPGTALAALPGVHALTDVTGFGLLGHTLELARGAGLTARVRYGALPWLAGVEALVADGVLTGASGRNWAAYGHDVRLGDGLPAVAQALLTDPQTSGGLLVACAPEAVDDVLACFRDDGFERAAAIGEMVDGAARVDVS.

The active site involves Cys23. ATP is bound by residues Lys26 and 54–56 (TSD). Residue Asp57 participates in Mg(2+) binding. Residues Asp74, Asp97, and 145 to 147 (GHS) contribute to the ATP site. Mg(2+) is bound at residue Asp97. Residue Asp233 participates in Mg(2+) binding.

Belongs to the selenophosphate synthase 1 family. Class I subfamily. In terms of assembly, homodimer. Mg(2+) serves as cofactor.

It carries out the reaction hydrogenselenide + ATP + H2O = selenophosphate + AMP + phosphate + 2 H(+). Its function is as follows. Synthesizes selenophosphate from selenide and ATP. The polypeptide is Selenide, water dikinase (Burkholderia pseudomallei (strain K96243)).